The following is a 269-amino-acid chain: 3-ketodihydrosphingosine reductase (269 aa).

Residues Gly-10, Ser-12, Ser-13, Gly-14, Lys-36, and Asp-50 each coordinate NADPH. Residues 10 to 14 carry the GXSXG motif; that stretch reads GASSG. The Nucleophile; for lipase activity role is filled by Ser-12. Ser-128 acts as the Proton donor in catalysis. The Proton acceptor role is filled by Tyr-142. NADP(+)-binding residues include Tyr-142 and Lys-146. NADPH is bound by residues 142–146 and 175–177; these read YSASK and FNT. Lys-146 is an active-site residue. Catalysis depends on Lys-146, which acts as the Lowers pKa of active site Tyr.

The protein belongs to the short-chain dehydrogenases/reductases (SDR) family.

It carries out the reaction sphinganine + NADP(+) = 3-oxosphinganine + NADPH + H(+). Its pathway is lipid metabolism; sphingolipid metabolism. Its function is as follows. Catalyzes the reduction of 3'-oxosphinganine (3-ketodihydrosphingosine/KDS) to sphinganine (dihydrosphingosine/DHS), the second step of de novo sphingolipid biosynthesis. This chain is 3-ketodihydrosphingosine reductase, found in Bacteroides thetaiotaomicron (strain ATCC 29148 / DSM 2079 / JCM 5827 / CCUG 10774 / NCTC 10582 / VPI-5482 / E50).